A 188-amino-acid chain; its full sequence is Elongation factor P-like protein (188 aa).

Belongs to the elongation factor P family.

The chain is Elongation factor P-like protein from Xanthomonas oryzae pv. oryzae (strain MAFF 311018).